We begin with the raw amino-acid sequence, 314 residues long: PDCD10 and GCKIII kinases-associated protein 1 (314 aa).

Phosphoserine is present on S30. Residues 36–142 (DDTDKLKGKW…TQPFLEGGGT (107 aa)) are disordered. T106 bears the Phosphothreonine mark. A compositionally biased stretch (polar residues) spans 107–116 (PQPTGNSSPT). Residues S238 and S241 each carry the phosphoserine modification. The segment at 267–291 (VDSGNRQEDTHGSDGDGDGEIVDED) is disordered. The span at 271 to 280 (NRQEDTHGSD) shows a compositional bias: basic and acidic residues. A compositionally biased stretch (acidic residues) spans 281-291 (GDGDGEIVDED).

Interacts with KEAP1; this interaction prevents the ubiquitination of KEAP1 by TRIM25, thus protecting KEAP1 from degradation. Found in association with PDCD10 and members of the STE20 kinases, such as STK24, STK25 and STK26.

It localises to the cell membrane. Acts as a tumor suppressor. Acts as a tumor suppressor for colorectal cancer cell proliferation by targeting KEAP1/USP17/ELK1/CDK6 axis. The polypeptide is PDCD10 and GCKIII kinases-associated protein 1 (Homo sapiens (Human)).